A 266-amino-acid polypeptide reads, in one-letter code: HLA class II histocompatibility antigen, DR beta 4 chain (266 aa).

Residues 1–29 form the signal peptide; the sequence is MVCLKLPGGSCMAALTVTLTVLSSPLALA. Residues 30 to 124 form a beta-1 region; sequence GDTQPRFLEQ…VESFTVQRRV (95 aa). Residues 30–227 lie on the Extracellular side of the membrane; that stretch reads GDTQPRFLEQ…SARSESAQSK (198 aa). 2 disulfides stabilise this stretch: cysteine 44/cysteine 108 and cysteine 146/cysteine 202. Residue asparagine 48 is glycosylated (N-linked (GlcNAc...) asparagine). Positions 125-227 are beta-2; the sequence is QPKVTVYPSK…SARSESAQSK (103 aa). In terms of domain architecture, Ig-like C1-type spans 126-216; it reads PKVTVYPSKT…PSMMSPLTVQ (91 aa). Residues 228-250 traverse the membrane as a helical segment; that stretch reads MLSGVGGFVLGLLFLGTGLFIYF. Topologically, residues 251–266 are cytoplasmic; that stretch reads RNQKGHSGLQPTGLLS. Residue lysine 254 forms a Glycyl lysine isopeptide (Lys-Gly) (interchain with G-Cter in ubiquitin) linkage.

The protein belongs to the MHC class II family. Heterodimer of an alpha and a beta subunit; also referred as MHC class II molecule. In the endoplasmic reticulum (ER) it forms a heterononamer; 3 MHC class II molecules bind to a CD74 homotrimer (also known as invariant chain or HLA class II histocompatibility antigen gamma chain). In the endosomal/lysosomal system; CD74 undergoes sequential degradation by various proteases; leaving a small fragment termed CLIP on each MHC class II molecule. MHC class II molecule interacts with HLA_DM, and HLA_DO in B-cells, in order to release CLIP and facilitate the binding of antigenic peptides. Post-translationally, ubiquitinated by MARCH1 and MARCH8 at Lys-254 leading to sorting into the endosome system and down-regulation of MHC class II. When associated with ubiquitination of the alpha subunit of HLA-DR: HLA-DRA 'Lys-244', the down-regulation of MHC class II may be highly effective.

Its subcellular location is the cell membrane. The protein resides in the endoplasmic reticulum membrane. The protein localises to the golgi apparatus. It localises to the trans-Golgi network membrane. It is found in the endosome membrane. Its subcellular location is the lysosome membrane. The protein resides in the late endosome membrane. Its function is as follows. Binds peptides derived from antigens that access the endocytic route of antigen presenting cells (APC) and presents them on the cell surface for recognition by the CD4 T-cells. The peptide binding cleft accommodates peptides of 10-30 residues. The peptides presented by MHC class II molecules are generated mostly by degradation of proteins that access the endocytic route, where they are processed by lysosomal proteases and other hydrolases. Exogenous antigens that have been endocytosed by the APC are thus readily available for presentation via MHC II molecules, and for this reason this antigen presentation pathway is usually referred to as exogenous. As membrane proteins on their way to degradation in lysosomes as part of their normal turn-over are also contained in the endosomal/lysosomal compartments, exogenous antigens must compete with those derived from endogenous components. Autophagy is also a source of endogenous peptides, autophagosomes constitutively fuse with MHC class II loading compartments. In addition to APCs, other cells of the gastrointestinal tract, such as epithelial cells, express MHC class II molecules and CD74 and act as APCs, which is an unusual trait of the GI tract. To produce a MHC class II molecule that presents an antigen, three MHC class II molecules (heterodimers of an alpha and a beta chain) associate with a CD74 trimer in the ER to form a heterononamer. Soon after the entry of this complex into the endosomal/lysosomal system where antigen processing occurs, CD74 undergoes a sequential degradation by various proteases, including CTSS and CTSL, leaving a small fragment termed CLIP (class-II-associated invariant chain peptide). The removal of CLIP is facilitated by HLA-DM via direct binding to the alpha-beta-CLIP complex so that CLIP is released. HLA-DM stabilizes MHC class II molecules until primary high affinity antigenic peptides are bound. The MHC II molecule bound to a peptide is then transported to the cell membrane surface. In B-cells, the interaction between HLA-DM and MHC class II molecules is regulated by HLA-DO. Primary dendritic cells (DCs) also to express HLA-DO. Lysosomal microenvironment has been implicated in the regulation of antigen loading into MHC II molecules, increased acidification produces increased proteolysis and efficient peptide loading. The chain is HLA class II histocompatibility antigen, DR beta 4 chain (HLA-DRB4) from Homo sapiens (Human).